The following is a 131-amino-acid chain: MPVTDSIADFITRIRNAGRARNKTTDIPYSKLRENMSQLLLEKGYIKNFTVITTEKFPIIRVDLKYGATGESAIKEITRVSKPGRRVYDGKDIKKYLGGLGLYILSSSKGIITDKEARAQGVGGEVLFRIY.

Belongs to the universal ribosomal protein uS8 family. In terms of assembly, part of the 30S ribosomal subunit. Contacts proteins S5 and S12.

Functionally, one of the primary rRNA binding proteins, it binds directly to 16S rRNA central domain where it helps coordinate assembly of the platform of the 30S subunit. The sequence is that of Small ribosomal subunit protein uS8 from Chlorobium phaeobacteroides (strain DSM 266 / SMG 266 / 2430).